We begin with the raw amino-acid sequence, 196 residues long: GTP cyclohydrolase 1 (196 aa).

Residues cysteine 86, histidine 89, and cysteine 158 each coordinate Zn(2+).

Belongs to the GTP cyclohydrolase I family. Toroid-shaped homodecamer, composed of two pentamers of five dimers.

It carries out the reaction GTP + H2O = 7,8-dihydroneopterin 3'-triphosphate + formate + H(+). Its pathway is cofactor biosynthesis; 7,8-dihydroneopterin triphosphate biosynthesis; 7,8-dihydroneopterin triphosphate from GTP: step 1/1. The sequence is that of GTP cyclohydrolase 1 from Clostridium botulinum (strain Langeland / NCTC 10281 / Type F).